The chain runs to 177 residues: Putative fimbrin-like protein FimI (177 aa).

Positions 1–19 (MIRKGAALVGLVLMSPVIA) are cleaved as a signal peptide. Residues Cys40 and Cys81 are joined by a disulfide bond.

It belongs to the fimbrial protein family.

The protein localises to the fimbrium. This chain is Putative fimbrin-like protein FimI (fimI), found in Salmonella typhi.